The sequence spans 211 residues: Ribonuclease T (211 aa).

An Exonuclease domain is found at Val24 to Phe198. The Mg(2+) site is built by Asp27, Glu29, His185, and Asp190. His185 serves as the catalytic Proton donor/acceptor.

It belongs to the RNase T family. Homodimer. Mg(2+) serves as cofactor.

In terms of biological role, trims short 3' overhangs of a variety of RNA species, leaving a one or two nucleotide 3' overhang. Responsible for the end-turnover of tRNA: specifically removes the terminal AMP residue from uncharged tRNA (tRNA-C-C-A). Also appears to be involved in tRNA biosynthesis. The chain is Ribonuclease T from Xylella fastidiosa (strain Temecula1 / ATCC 700964).